Consider the following 263-residue polypeptide: 2-keto-4-pentenoate hydratase 1 (263 aa).

The protein belongs to the hydratase/decarboxylase family. MhpD subfamily. Requires a divalent metal cation as cofactor.

The catalysed reaction is (S)-4-hydroxy-2-oxopentanoate = (2Z)-2-hydroxypenta-2,4-dienoate + H2O. The protein operates within aromatic compound metabolism; 3-phenylpropanoate degradation. Its function is as follows. Catalyzes the conversion of 2-hydroxypentadienoic acid (enolic form of 2-oxopent-4-enoate) to 4-hydroxy-2-ketopentanoic acid. This chain is 2-keto-4-pentenoate hydratase 1, found in Dechloromonas aromatica (strain RCB).